The chain runs to 626 residues: Carnitine O-acetyltransferase (626 aa).

N6-succinyllysine is present on Lys93. At Lys261 the chain carries N6-acetyllysine; alternate. Lys261 is modified (N6-succinyllysine; alternate). Residue Lys268 is modified to N6-acetyllysine. His343 acts as the Proton acceptor in catalysis. CoA-binding positions include Lys419 and Lys423 to Asp430. (R)-carnitine is bound by residues Tyr452 and Ser454. A CoA-binding site is contributed by Ser456. (R)-carnitine is bound at residue Thr465. 2 residues coordinate CoA: Arg504 and Gln555. The Microbody targeting signal motif lies at Ala624–Leu626.

Belongs to the carnitine/choline acetyltransferase family. Monomer.

Its subcellular location is the endoplasmic reticulum. It localises to the peroxisome. The protein resides in the mitochondrion inner membrane. The catalysed reaction is (R)-carnitine + acetyl-CoA = O-acetyl-(R)-carnitine + CoA. The enzyme catalyses propanoyl-CoA + (R)-carnitine = O-propanoyl-(R)-carnitine + CoA. It catalyses the reaction butanoyl-CoA + (R)-carnitine = O-butanoyl-(R)-carnitine + CoA. It carries out the reaction hexanoyl-CoA + (R)-carnitine = O-hexanoyl-(R)-carnitine + CoA. The catalysed reaction is octanoyl-CoA + (R)-carnitine = O-octanoyl-(R)-carnitine + CoA. The enzyme catalyses decanoyl-CoA + (R)-carnitine = O-decanoyl-(R)-carnitine + CoA. It catalyses the reaction 3-methylbutanoyl-CoA + (R)-carnitine = O-3-methylbutanoyl-(R)-carnitine + CoA. It carries out the reaction 2-methylpropanoyl-CoA + (R)-carnitine = O-isobutanoyl-(R)-carnitine + CoA. The catalysed reaction is 2-methylbutanoyl-CoA + (R)-carnitine = O-2-methylbutanoyl-(R)-carnitine + CoA. The enzyme catalyses acetoacetyl-CoA + (R)-carnitine = O-3-oxobutanoyl-(R)-carnitine + CoA. It catalyses the reaction 3-hydroxybutanoyl-CoA + (R)-carnitine = O-3-hydroxybutanoyl-(R)-carnitine + CoA. It carries out the reaction 4,8-dimethylnonanoyl-CoA + (R)-carnitine = O-4,8-dimethylnonanoyl-(R)-carnitine + CoA. The catalysed reaction is 2,6-dimethylheptanoyl-CoA + (R)-carnitine = O-2,6-dimethylheptanoyl-(R)-carnitine + CoA. In terms of biological role, catalyzes the reversible transfer of acyl groups from carnitine to coenzyme A (CoA) and regulates the acyl-CoA/CoA ratio. Also plays a crucial role in the transport of fatty acids for beta-oxidation. Responsible for the synthesis of short- and branched-chain acylcarnitines. Active towards some branched-chain amino acid oxidation pathway (BCAAO) intermediates. Trans-2-enoyl-CoAs and 2-methylacyl-CoAs are poor substrates. This Mus musculus (Mouse) protein is Carnitine O-acetyltransferase.